Reading from the N-terminus, the 1410-residue chain is Endoribonuclease Dicer homolog 2a (1410 aa).

The segment covering 1-15 (MGGPLTAAGGRGDGG) has biased composition (gly residues). Positions 1 to 30 (MGGPLTAAGGRGDGGAKAVEPLRPPPPPDP) are disordered. The region spanning 41 to 222 (ALERAVRGNT…HNYSKQISEI (182 aa)) is the Helicase ATP-binding domain. 54-61 (LETGSGKT) contacts ATP. A DECH box motif is present at residues 163–166 (DECH). Positions 388-561 (TLLQYRHMQD…DTYYRVESTR (174 aa)) constitute a Helicase C-terminal domain. The 87-residue stretch at 569 to 655 (SVPLIHFFCS…LPELDVPCDE (87 aa)) folds into the Dicer dsRNA-binding fold domain. The 116-residue stretch at 827–942 (KDIDLLQTKD…LPPELCRIIM (116 aa)) folds into the PAZ domain. 2 consecutive RNase III domains span residues 969–1124 (SVKL…STAG) and 1161–1308 (VRSL…LDSK). 3 residues coordinate Mg(2+): glutamate 1200, aspartate 1294, and glutamate 1297. In terms of domain architecture, DRBM spans 1334–1400 (DPVKGLQEFC…SKAVLKDLIA (67 aa)).

This sequence belongs to the helicase family. Dicer subfamily. As to quaternary structure, may interact with ARGONAUTE1 or PINHEAD through their common PAZ domains. Mg(2+) serves as cofactor. Mn(2+) is required as a cofactor.

It is found in the nucleus. In terms of biological role, probably involved in the RNA silencing pathway. May cleave double-stranded RNA to produce short 21-24 nucleotides (nt) RNAs which target the selective destruction of complementary RNAs. The chain is Endoribonuclease Dicer homolog 2a (DCL2A) from Oryza sativa subsp. japonica (Rice).